The sequence spans 980 residues: MTTLASSYDPSSFESRLYAQWEAAGYFVPSGKGEPYTVLLPPPNVTGTLHMGHAFQQTLMDALVRYHRMRGYDTLWQVGTDHAGIATEMVVSRNLALEGKGQTRDSLGREGFIAKVWEWKAESGDTIERQMRRLGTSSDWSRSTFTMDPQPSAAVNEAFVRWYEQGLIYRGQRLVNWDPVLKTAISDLEVENVEEDGFLWSIRYPLADGVSYEHVEHDADGNETLRETRDYLVVATTRPETMLGDTAVMVHPEDARYLTLHDARIVLPLTGRHVPVITDDYVDRAFGTGVVKVTPAHDFNDYQVGERHNLPLVNLFTVDAKIIDPREQYPDDEYPVVDQGIDWRELNQVQRRRTGQHFAYSIPSAYVGLDRYEARKLVLAHLEDEGRLVETKPHKLQVPRGDRTGQVIEPYLTDQWFVKMDALAKRGLELVESGQIKFVPPNWINTYRHWMENIQDWCISRQLWWGHRIPAWFDEAGTCYVGHDEAEVRAKHGLGADVALHQDSDVLETWFSSQLWPFSTLGWPDAQAMAERGFARYLPSSVLVTGFDIIFFWVARMIMATDSFTGQVPFRDVYITGLIRDAQGQKMSKSKGNVLDPLDIIDGISIEDLVAKRTHGLMQPRMAEKIEKATRKEFPDGIIVHGADALRFTIAALATHGRDIKFDLGRAEGYKNFCNKLWNATRFVLMNTEGARFTGVPQPRTEAEKWILARLDKATAETHAHYANYRFDLLAQSLYEFAWNAFCDWFVELAKPALNNQDADAAASTRHTLLYVLESLLRLLHPLTPFVTEELWQQVAPRLGITTATISLQSFPQPGDVDTSSYATAEADVEWLKSMVSALRRVRSELNVPPSKQVRLLLQADTADDRPRVARLASQLSFLLKLERIDWLDAGQDTPPSAAAIVGELTLLVPLEGLVDMDAERTRLDKEIKRVEGEIAKCNGKLGSATFVQNAPAAVVEQERARLNDWTTQLTGLREQRAKI.

The short motif at 43–53 (PNVTGTLHMGH) is the 'HIGH' region element. Positions 586-590 (KMSKS) match the 'KMSKS' region motif. Lys-589 serves as a coordination point for ATP. A coiled-coil region spans residues 914–978 (LVDMDAERTR…QLTGLREQRA (65 aa)).

This sequence belongs to the class-I aminoacyl-tRNA synthetase family. ValS type 1 subfamily. As to quaternary structure, monomer.

It localises to the cytoplasm. It catalyses the reaction tRNA(Val) + L-valine + ATP = L-valyl-tRNA(Val) + AMP + diphosphate. Functionally, catalyzes the attachment of valine to tRNA(Val). As ValRS can inadvertently accommodate and process structurally similar amino acids such as threonine, to avoid such errors, it has a 'posttransfer' editing activity that hydrolyzes mischarged Thr-tRNA(Val) in a tRNA-dependent manner. The sequence is that of Valine--tRNA ligase from Xanthomonas euvesicatoria pv. vesicatoria (strain 85-10) (Xanthomonas campestris pv. vesicatoria).